A 425-amino-acid polypeptide reads, in one-letter code: 3-isopropylmalate dehydratase large subunit (425 aa).

3 residues coordinate [4Fe-4S] cluster: Cys-306, Cys-366, and Cys-369.

Belongs to the aconitase/IPM isomerase family. LeuC type 2 subfamily. Heterodimer of LeuC and LeuD. [4Fe-4S] cluster serves as cofactor.

It catalyses the reaction (2R,3S)-3-isopropylmalate = (2S)-2-isopropylmalate. It functions in the pathway amino-acid biosynthesis; L-leucine biosynthesis; L-leucine from 3-methyl-2-oxobutanoate: step 2/4. Functionally, catalyzes the isomerization between 2-isopropylmalate and 3-isopropylmalate, via the formation of 2-isopropylmaleate. This Nautilia profundicola (strain ATCC BAA-1463 / DSM 18972 / AmH) protein is 3-isopropylmalate dehydratase large subunit.